Reading from the N-terminus, the 473-residue chain is Argininosuccinate lyase (473 aa).

Alanine 2 is subject to N-acetylalanine. Lysine 7 is modified (N6-acetyllysine). Serine 27 lines the 2-(N(omega)-L-arginino)succinate pocket. N6-acetyllysine is present on lysine 69. 2-(N(omega)-L-arginino)succinate-binding residues include asparagine 114 and threonine 159. Catalysis depends on histidine 160, which acts as the Proton acceptor. Serine 281 acts as the Proton donor in catalysis. An N6-acetyllysine modification is found at lysine 288. 2-(N(omega)-L-arginino)succinate-binding residues include asparagine 289, tyrosine 321, glutamine 326, and lysine 329.

It belongs to the lyase 1 family. Argininosuccinate lyase subfamily. In terms of assembly, homotetramer. Forms tissue-specific complexes with ASS1, SLC7A1, HSP90AA1 and nitric oxide synthase NOS1, NOS2 or NOS3; the complex maintenance is independent of ASL catalytic function. Acetylation modifies enzyme activity in response to alterations of extracellular nutrient availability. Acetylation increased with trichostin A (TSA) or with nicotinamide (NAM). Glucose increases acetylation by about a factor of 3 with decreasing enzyme activity. Acetylation on Lys-288 is decreased on the addition of extra amino acids resulting in activation of enzyme activity.

It carries out the reaction 2-(N(omega)-L-arginino)succinate = fumarate + L-arginine. It functions in the pathway amino-acid biosynthesis; L-arginine biosynthesis; L-arginine from L-ornithine and carbamoyl phosphate: step 3/3. It participates in nitrogen metabolism; urea cycle; L-arginine and fumarate from (N(omega)-L-arginino)succinate: step 1/1. With respect to regulation, enzyme activity is regulated by acetylation. Catalyzes the reversible cleavage of L-argininosuccinate to fumarate and L-arginine, an intermediate step reaction in the urea cycle mostly providing for hepatic nitrogen detoxification into excretable urea as well as de novo L-arginine synthesis in nonhepatic tissues. Essential regulator of intracellular and extracellular L-arginine pools. As part of citrulline-nitric oxide cycle, forms tissue-specific multiprotein complexes with argininosuccinate synthase ASS1, transport protein SLC7A1 and nitric oxide synthase NOS1, NOS2 or NOS3, allowing for cell-autonomous L-arginine synthesis while channeling extracellular L-arginine to nitric oxide synthesis pathway. This is Argininosuccinate lyase (ASL) from Bos taurus (Bovine).